Consider the following 642-residue polypeptide: Rhotekin-2 (642 aa).

The REM-1 domain occupies 30–105 (IKRKKIRESM…AQKRTGHQDF (76 aa)). The PH domain occupies 306-413 (LDMMSGFLSQ…WLDSLWQHIY (108 aa)). Disordered stretches follow at residues 505–563 (TVLS…GRPS) and 575–642 (LQKS…PKAW). Basic and acidic residues-rich tracts occupy residues 597–615 (PEKR…KEYI) and 632–642 (SFREKMNPKAW).

In Danio rerio (Zebrafish), this protein is Rhotekin-2 (rtkn2).